We begin with the raw amino-acid sequence, 398 residues long: Carbamoyl phosphate synthase small chain (398 aa).

The CPSase stretch occupies residues 1 to 207 (MIQTISSSRP…KGYGTNNVHN (207 aa)). Residues serine 60, glycine 257, and glycine 259 each contribute to the L-glutamine site. Residues 209–397 (HIVAIDYGIK…CDLIMNHKKI (189 aa)) enclose the Glutamine amidotransferase type-1 domain. Catalysis depends on cysteine 286, which acts as the Nucleophile. The L-glutamine site is built by leucine 287, glutamine 290, asparagine 328, glycine 330, and phenylalanine 331. Residues histidine 370 and glutamate 372 contribute to the active site.

Belongs to the CarA family. In terms of assembly, composed of two chains; the small (or glutamine) chain promotes the hydrolysis of glutamine to ammonia, which is used by the large (or ammonia) chain to synthesize carbamoyl phosphate. Tetramer of heterodimers (alpha,beta)4.

It carries out the reaction hydrogencarbonate + L-glutamine + 2 ATP + H2O = carbamoyl phosphate + L-glutamate + 2 ADP + phosphate + 2 H(+). The catalysed reaction is L-glutamine + H2O = L-glutamate + NH4(+). It participates in amino-acid biosynthesis; L-arginine biosynthesis; carbamoyl phosphate from bicarbonate: step 1/1. It functions in the pathway pyrimidine metabolism; UMP biosynthesis via de novo pathway; (S)-dihydroorotate from bicarbonate: step 1/3. In terms of biological role, small subunit of the glutamine-dependent carbamoyl phosphate synthetase (CPSase). CPSase catalyzes the formation of carbamoyl phosphate from the ammonia moiety of glutamine, carbonate, and phosphate donated by ATP, constituting the first step of 2 biosynthetic pathways, one leading to arginine and/or urea and the other to pyrimidine nucleotides. The small subunit (glutamine amidotransferase) binds and cleaves glutamine to supply the large subunit with the substrate ammonia. In Bartonella tribocorum (strain CIP 105476 / IBS 506), this protein is Carbamoyl phosphate synthase small chain.